Reading from the N-terminus, the 154-residue chain is 17.7 kDa class I heat shock protein (154 aa).

The 115-residue stretch at 40–154 folds into the sHSP domain; sequence ETSAFANTRI…PDVKSIEISG (115 aa).

This sequence belongs to the small heat shock protein (HSP20) family. In terms of assembly, forms oligomeric structures.

It localises to the cytoplasm. The chain is 17.7 kDa class I heat shock protein from Solanum peruvianum (Peruvian tomato).